The sequence spans 348 residues: Anthranilate phosphoribosyltransferase (348 aa).

Residues Gly81, 84–85 (GD), 91–94 (NVST), 109–117 (KHGNRAVSG), and Ser121 each bind 5-phospho-alpha-D-ribose 1-diphosphate. Gly81 lines the anthranilate pocket. Ser93 is a binding site for Mg(2+). Residue Asn112 participates in anthranilate binding. Arg167 contributes to the anthranilate binding site. Asp226 and Glu227 together coordinate Mg(2+).

The protein belongs to the anthranilate phosphoribosyltransferase family. Homodimer. Requires Mg(2+) as cofactor.

It carries out the reaction N-(5-phospho-beta-D-ribosyl)anthranilate + diphosphate = 5-phospho-alpha-D-ribose 1-diphosphate + anthranilate. It participates in amino-acid biosynthesis; L-tryptophan biosynthesis; L-tryptophan from chorismate: step 2/5. Its function is as follows. Catalyzes the transfer of the phosphoribosyl group of 5-phosphorylribose-1-pyrophosphate (PRPP) to anthranilate to yield N-(5'-phosphoribosyl)-anthranilate (PRA). This is Anthranilate phosphoribosyltransferase from Stutzerimonas stutzeri (strain A1501) (Pseudomonas stutzeri).